Consider the following 378-residue polypeptide: Ribosomal RNA large subunit methyltransferase G (378 aa).

This sequence belongs to the methyltransferase superfamily. RlmG family.

Its subcellular location is the cytoplasm. It carries out the reaction guanosine(1835) in 23S rRNA + S-adenosyl-L-methionine = N(2)-methylguanosine(1835) in 23S rRNA + S-adenosyl-L-homocysteine + H(+). Specifically methylates the guanine in position 1835 (m2G1835) of 23S rRNA. In Salmonella newport (strain SL254), this protein is Ribosomal RNA large subunit methyltransferase G.